Consider the following 88-residue polypeptide: Elongation factor 1-beta (88 aa).

It belongs to the EF-1-beta/EF-1-delta family.

Functionally, promotes the exchange of GDP for GTP in EF-1-alpha/GDP, thus allowing the regeneration of EF-1-alpha/GTP that could then be used to form the ternary complex EF-1-alpha/GTP/AAtRNA. This is Elongation factor 1-beta from Haloarcula marismortui (strain ATCC 43049 / DSM 3752 / JCM 8966 / VKM B-1809) (Halobacterium marismortui).